A 91-amino-acid polypeptide reads, in one-letter code: Putative defective replication initiation protein (91 aa).

This is Putative defective replication initiation protein (repA1) from Escherichia coli (strain K12).